Consider the following 921-residue polypeptide: Protein translocase subunit SecA (921 aa).

Residues glutamine 87, 105–109 (GEGKT), and aspartate 516 contribute to the ATP site. Zn(2+) contacts are provided by cysteine 905, cysteine 907, cysteine 916, and histidine 917.

It belongs to the SecA family. In terms of assembly, monomer and homodimer. Part of the essential Sec protein translocation apparatus which comprises SecA, SecYEG and auxiliary proteins SecDF-YajC and YidC. Zn(2+) serves as cofactor.

The protein localises to the cell inner membrane. The protein resides in the cytoplasm. The catalysed reaction is ATP + H2O + cellular proteinSide 1 = ADP + phosphate + cellular proteinSide 2.. Part of the Sec protein translocase complex. Interacts with the SecYEG preprotein conducting channel. Has a central role in coupling the hydrolysis of ATP to the transfer of proteins into and across the cell membrane, serving both as a receptor for the preprotein-SecB complex and as an ATP-driven molecular motor driving the stepwise translocation of polypeptide chains across the membrane. In Albidiferax ferrireducens (strain ATCC BAA-621 / DSM 15236 / T118) (Rhodoferax ferrireducens), this protein is Protein translocase subunit SecA.